A 100-amino-acid polypeptide reads, in one-letter code: Aspartyl/glutamyl-tRNA(Asn/Gln) amidotransferase subunit C (100 aa).

It belongs to the GatC family. Heterotrimer of A, B and C subunits.

It carries out the reaction L-glutamyl-tRNA(Gln) + L-glutamine + ATP + H2O = L-glutaminyl-tRNA(Gln) + L-glutamate + ADP + phosphate + H(+). The catalysed reaction is L-aspartyl-tRNA(Asn) + L-glutamine + ATP + H2O = L-asparaginyl-tRNA(Asn) + L-glutamate + ADP + phosphate + 2 H(+). Allows the formation of correctly charged Asn-tRNA(Asn) or Gln-tRNA(Gln) through the transamidation of misacylated Asp-tRNA(Asn) or Glu-tRNA(Gln) in organisms which lack either or both of asparaginyl-tRNA or glutaminyl-tRNA synthetases. The reaction takes place in the presence of glutamine and ATP through an activated phospho-Asp-tRNA(Asn) or phospho-Glu-tRNA(Gln). The polypeptide is Aspartyl/glutamyl-tRNA(Asn/Gln) amidotransferase subunit C (Staphylococcus saprophyticus subsp. saprophyticus (strain ATCC 15305 / DSM 20229 / NCIMB 8711 / NCTC 7292 / S-41)).